The sequence spans 607 residues: uncharacterized protein (607 aa).

This is an uncharacterized protein from Ictalurid herpesvirus 1 (strain Auburn) (IcHV-1).